The sequence spans 75 residues: Tautomerase PptA (75 aa).

P2 functions as the Proton acceptor; via imino nitrogen in the catalytic mechanism.

It belongs to the 4-oxalocrotonate tautomerase family. PptA subfamily. As to quaternary structure, homodimer.

Its subcellular location is the cytoplasm. This chain is Tautomerase PptA, found in Escherichia coli (strain SMS-3-5 / SECEC).